The primary structure comprises 417 residues: Serine hydroxymethyltransferase (417 aa).

Residues leucine 120 and 124-126 (GHL) each bind (6S)-5,6,7,8-tetrahydrofolate. Lysine 229 is modified (N6-(pyridoxal phosphate)lysine). 354–356 (SPF) provides a ligand contact to (6S)-5,6,7,8-tetrahydrofolate.

This sequence belongs to the SHMT family. As to quaternary structure, homodimer. Requires pyridoxal 5'-phosphate as cofactor.

It is found in the cytoplasm. The enzyme catalyses (6R)-5,10-methylene-5,6,7,8-tetrahydrofolate + glycine + H2O = (6S)-5,6,7,8-tetrahydrofolate + L-serine. The protein operates within one-carbon metabolism; tetrahydrofolate interconversion. It participates in amino-acid biosynthesis; glycine biosynthesis; glycine from L-serine: step 1/1. In terms of biological role, catalyzes the reversible interconversion of serine and glycine with tetrahydrofolate (THF) serving as the one-carbon carrier. This reaction serves as the major source of one-carbon groups required for the biosynthesis of purines, thymidylate, methionine, and other important biomolecules. Also exhibits THF-independent aldolase activity toward beta-hydroxyamino acids, producing glycine and aldehydes, via a retro-aldol mechanism. This chain is Serine hydroxymethyltransferase, found in Acinetobacter baumannii (strain AB307-0294).